Consider the following 586-residue polypeptide: CTP synthase (586 aa).

The interval 1 to 278 is amidoligase domain; sequence MRKHPQTATK…DAFVVRRLNL (278 aa). Residue Ser20 coordinates CTP. Ser20 is a UTP binding site. ATP contacts are provided by residues 21–26 and Asp78; that span reads SLGKGL. Residues Asp78 and Glu152 each coordinate Mg(2+). Residues 159–161, 199–204, and Lys235 contribute to the CTP site; these read DIE and KTKPTQ. Residues 199–204 and Lys235 each bind UTP; that span reads KTKPTQ. The 249-residue stretch at 303–551 folds into the Glutamine amidotransferase type-1 domain; it reads RIALVGKYVE…VGAAIDYKAG (249 aa). An L-glutamine-binding site is contributed by Gly366. The Nucleophile; for glutamine hydrolysis role is filled by Cys393. L-glutamine contacts are provided by residues 394–397, Glu416, and Arg477; that span reads LGLQ. Active-site residues include His524 and Glu526. The tract at residues 560-586 is disordered; sequence EIPEHTPNGSSHRDGVGQPLPEPASRG.

Belongs to the CTP synthase family. As to quaternary structure, homotetramer.

It carries out the reaction UTP + L-glutamine + ATP + H2O = CTP + L-glutamate + ADP + phosphate + 2 H(+). The catalysed reaction is L-glutamine + H2O = L-glutamate + NH4(+). It catalyses the reaction UTP + NH4(+) + ATP = CTP + ADP + phosphate + 2 H(+). It participates in pyrimidine metabolism; CTP biosynthesis via de novo pathway; CTP from UDP: step 2/2. Its activity is regulated as follows. Allosterically activated by GTP, when glutamine is the substrate; GTP has no effect on the reaction when ammonia is the substrate. The allosteric effector GTP functions by stabilizing the protein conformation that binds the tetrahedral intermediate(s) formed during glutamine hydrolysis. Inhibited by the product CTP, via allosteric rather than competitive inhibition. Its function is as follows. Catalyzes the ATP-dependent amination of UTP to CTP with either L-glutamine or ammonia as the source of nitrogen. Regulates intracellular CTP levels through interactions with the four ribonucleotide triphosphates. The protein is CTP synthase of Mycobacterium tuberculosis (strain ATCC 25177 / H37Ra).